The sequence spans 211 residues: Large ribosomal subunit protein uL4 (211 aa).

2 disordered regions span residues 1–28 (MAQAQVFDARTGRRSEMELKGPRFETEP) and 48–99 (TAST…GPRY). Residues 10–28 (RTGRRSEMELKGPRFETEP) are compositionally biased toward basic and acidic residues.

Belongs to the universal ribosomal protein uL4 family. In terms of assembly, part of the 50S ribosomal subunit.

Functionally, one of the primary rRNA binding proteins, this protein initially binds near the 5'-end of the 23S rRNA. It is important during the early stages of 50S assembly. It makes multiple contacts with different domains of the 23S rRNA in the assembled 50S subunit and ribosome. In terms of biological role, forms part of the polypeptide exit tunnel. This chain is Large ribosomal subunit protein uL4, found in Rubrobacter xylanophilus (strain DSM 9941 / JCM 11954 / NBRC 16129 / PRD-1).